A 141-amino-acid chain; its full sequence is Large ribosomal subunit protein bL17 (141 aa).

Belongs to the bacterial ribosomal protein bL17 family. As to quaternary structure, part of the 50S ribosomal subunit. Contacts protein L32.

This chain is Large ribosomal subunit protein bL17, found in Sinorhizobium medicae (strain WSM419) (Ensifer medicae).